A 213-amino-acid polypeptide reads, in one-letter code: Peptidyl-tRNA hydrolase (213 aa).

TRNA is bound at residue Y15. H20 functions as the Proton acceptor in the catalytic mechanism. Positions 66, 68, and 114 each coordinate tRNA. Residues 187-213 (HTTKPPRPKPPRPAAAPVDAPAAPGDQ) are disordered. Low complexity predominate over residues 201–213 (AAPVDAPAAPGDQ).

This sequence belongs to the PTH family. In terms of assembly, monomer.

Its subcellular location is the cytoplasm. The catalysed reaction is an N-acyl-L-alpha-aminoacyl-tRNA + H2O = an N-acyl-L-amino acid + a tRNA + H(+). In terms of biological role, hydrolyzes ribosome-free peptidyl-tRNAs (with 1 or more amino acids incorporated), which drop off the ribosome during protein synthesis, or as a result of ribosome stalling. Its function is as follows. Catalyzes the release of premature peptidyl moieties from peptidyl-tRNA molecules trapped in stalled 50S ribosomal subunits, and thus maintains levels of free tRNAs and 50S ribosomes. This is Peptidyl-tRNA hydrolase from Paracidovorax citrulli (strain AAC00-1) (Acidovorax citrulli).